A 228-amino-acid polypeptide reads, in one-letter code: MKELRSKLEKDYGIVFANQELLDTAFTHTSYANEHRLLNISHNERLEFLGDAVLQLLISQYLFTKYPQKAEGDLSKLRSMIVREESLAGFSRLCGFDHYIKLGKGEEKSGGRNRDTILGDLFEAFLGALLLDKGVEVVHAFVNKVMIPHVEKGTYERVKDYKTSLQELLQSHGDVKIDYQVTNESGPAHAKEFEVTVSVNQENLSQGIGRSKKAAEQDAAKNALATLQ.

In terms of domain architecture, RNase III spans 5–134; sequence RSKLEKDYGI…FLGALLLDKG (130 aa). Glu47 contacts Mg(2+). Asp51 is an active-site residue. Asp120 and Glu123 together coordinate Mg(2+). Glu123 is an active-site residue. The region spanning 160 to 228 is the DRBM domain; that stretch reads DYKTSLQELL…AAKNALATLQ (69 aa).

Belongs to the ribonuclease III family. As to quaternary structure, homodimer. Mg(2+) is required as a cofactor.

It localises to the cytoplasm. The enzyme catalyses Endonucleolytic cleavage to 5'-phosphomonoester.. Digests double-stranded RNA. Involved in the processing of primary rRNA transcript to yield the immediate precursors to the large and small rRNAs (23S and 16S). Processes some mRNAs, and tRNAs when they are encoded in the rRNA operon. Processes pre-crRNA and tracrRNA of type II CRISPR loci if present in the organism. This chain is Ribonuclease 3, found in Streptococcus agalactiae serotype III (strain NEM316).